Here is a 342-residue protein sequence, read N- to C-terminus: L-threonine 3-dehydrogenase (342 aa).

Cys38 serves as a coordination point for Zn(2+). Active-site charge relay system residues include Thr40 and His43. 6 residues coordinate Zn(2+): His63, Glu64, Cys93, Cys96, Cys99, and Cys107. NAD(+) contacts are provided by residues Ile175, Asp195, Arg200, Leu262–Ile264, and Ile286–Tyr287.

Belongs to the zinc-containing alcohol dehydrogenase family. As to quaternary structure, homotetramer. The cofactor is Zn(2+).

It localises to the cytoplasm. It carries out the reaction L-threonine + NAD(+) = (2S)-2-amino-3-oxobutanoate + NADH + H(+). The protein operates within amino-acid degradation; L-threonine degradation via oxydo-reductase pathway; glycine from L-threonine: step 1/2. Functionally, catalyzes the NAD(+)-dependent oxidation of L-threonine to 2-amino-3-ketobutyrate. This is L-threonine 3-dehydrogenase from Burkholderia lata (strain ATCC 17760 / DSM 23089 / LMG 22485 / NCIMB 9086 / R18194 / 383).